Here is a 124-residue protein sequence, read N- to C-terminus: Large ribosomal subunit protein uL22 (124 aa).

This sequence belongs to the universal ribosomal protein uL22 family. Part of the 50S ribosomal subunit.

This protein binds specifically to 23S rRNA; its binding is stimulated by other ribosomal proteins, e.g. L4, L17, and L20. It is important during the early stages of 50S assembly. It makes multiple contacts with different domains of the 23S rRNA in the assembled 50S subunit and ribosome. Its function is as follows. The globular domain of the protein is located near the polypeptide exit tunnel on the outside of the subunit, while an extended beta-hairpin is found that lines the wall of the exit tunnel in the center of the 70S ribosome. This Synechococcus sp. (strain JA-2-3B'a(2-13)) (Cyanobacteria bacterium Yellowstone B-Prime) protein is Large ribosomal subunit protein uL22.